The following is a 630-amino-acid chain: tRNA uridine 5-carboxymethylaminomethyl modification enzyme MnmG (630 aa).

Position 13 to 18 (13 to 18) interacts with FAD; sequence GGGHAG. An NAD(+)-binding site is contributed by 273-287; that stretch reads GPRYCPSIEDKIHRF.

The protein belongs to the MnmG family. In terms of assembly, homodimer. Heterotetramer of two MnmE and two MnmG subunits. FAD serves as cofactor.

The protein localises to the cytoplasm. NAD-binding protein involved in the addition of a carboxymethylaminomethyl (cmnm) group at the wobble position (U34) of certain tRNAs, forming tRNA-cmnm(5)s(2)U34. This Pseudomonas aeruginosa (strain ATCC 15692 / DSM 22644 / CIP 104116 / JCM 14847 / LMG 12228 / 1C / PRS 101 / PAO1) protein is tRNA uridine 5-carboxymethylaminomethyl modification enzyme MnmG.